The sequence spans 426 residues: Limonoid 21-O-acetyltransferse (426 aa).

Active-site proton acceptor residues include histidine 152 and aspartate 365.

Belongs to the plant acyltransferase family. As to quaternary structure, monomer. In terms of tissue distribution, expressed in maturing fruits and in juice vesicles.

It catalyses the reaction isomeliandiol + acetyl-CoA = 21-O-acetyl-isomeliandiol + CoA. Its pathway is secondary metabolite biosynthesis; terpenoid biosynthesis. Acetyltransferase involved in the biosynthesis of limonoids triterpene natural products such as limonin, a compound with insecticidal activity responsible for the bitter taste in citrus. Catalyzes the formation of 21-O-acetyl-isomeliandiol from isomeliandiol. This chain is Limonoid 21-O-acetyltransferse, found in Citrus sinensis (Sweet orange).